An 89-amino-acid polypeptide reads, in one-letter code: Small ribosomal subunit protein bS20 (89 aa).

The protein belongs to the bacterial ribosomal protein bS20 family.

Binds directly to 16S ribosomal RNA. The polypeptide is Small ribosomal subunit protein bS20 (Xanthobacter autotrophicus (strain ATCC BAA-1158 / Py2)).